The primary structure comprises 625 residues: Interferon-induced GTP-binding protein Mx2 (625 aa).

The 274-residue stretch at 29–302 folds into the Dynamin-type G domain; it reads DLALPAIAVI…LVFHIGRCLP (274 aa). Positions 39–46 are G1 motif; it reads GDQSSGKS. 39–46 contacts GTP; it reads GDQSSGKS. The segment at 64–66 is G2 motif; sequence VTR. Positions 140–143 are G3 motif; the sequence is DLPG. Residues 140–144 and 209–212 contribute to the GTP site; these read DLPGI and TKPD. The G4 motif stretch occupies residues 209–212; it reads TKPD. The interval 241–244 is G5 motif; sequence RCRG. A GED domain is found at 539–625; sequence REELTCHLKS…TEALKYLAKF (87 aa).

Belongs to the TRAFAC class dynamin-like GTPase superfamily. Dynamin/Fzo/YdjA family.

It is found in the cytoplasm. This Ictalurus punctatus (Channel catfish) protein is Interferon-induced GTP-binding protein Mx2 (mx2).